Here is a 469-residue protein sequence, read N- to C-terminus: Cytochrome c biogenesis protein CcsB (469 aa).

3 consecutive transmembrane segments (helical) span residues 30-50 (LRLA…GTVI), 89-109 (TPWF…CSLT), and 175-195 (IGPI…IWGS).

Belongs to the Ccs1/CcsB family. May interact with CcsA.

Its subcellular location is the cellular thylakoid membrane. Functionally, required during biogenesis of c-type cytochromes (cytochrome c6 and cytochrome f) at the step of heme attachment. In Synechococcus sp. (strain JA-2-3B'a(2-13)) (Cyanobacteria bacterium Yellowstone B-Prime), this protein is Cytochrome c biogenesis protein CcsB.